A 173-amino-acid chain; its full sequence is Flavodoxin 2 (173 aa).

Residues 3-165 (MGLFYGSSTC…RIQTWCEQIL (163 aa)) form the Flavodoxin-like domain.

It belongs to the flavodoxin family. The cofactor is FMN.

Functionally, low-potential electron donor to a number of redox enzymes. The protein is Flavodoxin 2 (fldB) of Salmonella typhi.